We begin with the raw amino-acid sequence, 257 residues long: Adenosylcobinamide-GDP ribazoletransferase (257 aa).

6 consecutive transmembrane segments (helical) span residues 7–27, 39–59, 61–81, 113–133, 143–163, and 196–216; these read QLTL…PTWV, RYFG…YEIT, GFLP…VVTG, IGTY…ILLS, VVTA…SLIF, and VLVL…GLVL.

The protein belongs to the CobS family. The cofactor is Mg(2+).

Its subcellular location is the cell inner membrane. It carries out the reaction alpha-ribazole + adenosylcob(III)inamide-GDP = adenosylcob(III)alamin + GMP + H(+). The catalysed reaction is alpha-ribazole 5'-phosphate + adenosylcob(III)inamide-GDP = adenosylcob(III)alamin 5'-phosphate + GMP + H(+). The protein operates within cofactor biosynthesis; adenosylcobalamin biosynthesis; adenosylcobalamin from cob(II)yrinate a,c-diamide: step 7/7. Joins adenosylcobinamide-GDP and alpha-ribazole to generate adenosylcobalamin (Ado-cobalamin). Also synthesizes adenosylcobalamin 5'-phosphate from adenosylcobinamide-GDP and alpha-ribazole 5'-phosphate. This is Adenosylcobinamide-GDP ribazoletransferase from Shewanella woodyi (strain ATCC 51908 / MS32).